The sequence spans 39 residues: MDWRVLVVVGPLLIAASWAVFNIGAAAIRQLQEFRSRES.

A helical transmembrane segment spans residues 5–23 (VLVVVGPLLIAASWAVFNI).

Belongs to the PsbY family. As to quaternary structure, PSII is composed of 1 copy each of membrane proteins PsbA, PsbB, PsbC, PsbD, PsbE, PsbF, PsbH, PsbI, PsbJ, PsbK, PsbL, PsbM, PsbT, PsbX, PsbY, PsbZ, Psb30/Ycf12, peripheral proteins PsbO, CyanoQ (PsbQ), PsbU, PsbV and a large number of cofactors. It forms dimeric complexes.

The protein resides in the cellular thylakoid membrane. In terms of biological role, loosely associated component of the core of photosystem II (PSII), it is not always seen in crystals. PSII is a light-driven water plastoquinone oxidoreductase, using light energy to abstract electrons from H(2)O, generating a proton gradient subsequently used for ATP formation. The protein is Photosystem II reaction center protein Y of Rippkaea orientalis (strain PCC 8801 / RF-1) (Cyanothece sp. (strain PCC 8801)).